Reading from the N-terminus, the 299-residue chain is Ethylmalonyl-CoA decarboxylase (299 aa).

This sequence belongs to the enoyl-CoA hydratase/isomerase family.

The protein localises to the cytoplasm. It is found in the cytosol. The enzyme catalyses (2S)-ethylmalonyl-CoA + H(+) = butanoyl-CoA + CO2. The catalysed reaction is (S)-methylmalonyl-CoA + H(+) = propanoyl-CoA + CO2. It carries out the reaction (2R)-ethylmalonyl-CoA + H(+) = butanoyl-CoA + CO2. In terms of biological role, decarboxylates ethylmalonyl-CoA, a potentially toxic metabolite, to form butyryl-CoA, suggesting it might be involved in metabolite proofreading. Acts preferentially on (S)-ethylmalonyl-CoA but also has some activity on the (R)-isomer. Also has methylmalonyl-CoA decarboxylase activity at lower level. This Xenopus tropicalis (Western clawed frog) protein is Ethylmalonyl-CoA decarboxylase (echdc1).